The chain runs to 255 residues: Probable iron chelatin transport ATP-binding protein HP_0888 (255 aa).

The ABC transporter domain occupies 3–240 (LEVKNLSFKY…HNLSALYDTP (238 aa)). Residue 35-42 (APNGSGKT) coordinates ATP.

Belongs to the ABC transporter superfamily.

The protein resides in the cell inner membrane. In terms of biological role, part of a binding-protein-dependent transport system for an iron chelatin. Probably responsible for energy coupling to the transport system (Potential). This chain is Probable iron chelatin transport ATP-binding protein HP_0888, found in Helicobacter pylori (strain ATCC 700392 / 26695) (Campylobacter pylori).